A 236-amino-acid polypeptide reads, in one-letter code: Chorionic somatomammotropin hormone (236 aa).

Positions 1 to 36 are cleaved as a signal peptide; that stretch reads MAPASSHREHQWTCNLVRGSRLLLLLVVSNLILCQG. Intrachain disulfides connect Cys-44-Cys-51, Cys-97-Cys-212, and Cys-229-Cys-234.

This sequence belongs to the somatotropin/prolactin family.

It localises to the secreted. In Ovis aries (Sheep), this protein is Chorionic somatomammotropin hormone (CSH).